A 198-amino-acid chain; its full sequence is Recombination protein RecR (198 aa).

The C4-type zinc finger occupies 57-72; that stretch reads CSICGNLTDQDPCAIC. Positions 80-175 constitute a Toprim domain; sequence STILIVEDSR…KVTRLARGLA (96 aa).

Belongs to the RecR family.

Its function is as follows. May play a role in DNA repair. It seems to be involved in an RecBC-independent recombinational process of DNA repair. It may act with RecF and RecO. The chain is Recombination protein RecR from Streptococcus suis (strain 05ZYH33).